We begin with the raw amino-acid sequence, 206 residues long: Pyridoxine/pyridoxamine 5'-phosphate oxidase (206 aa).

FMN is bound by residues 49-54 (RMVLLK), 69-70 (YT), Lys76, and Gln98. Lys54 provides a ligand contact to substrate. The substrate site is built by Tyr116, Arg120, and Ser124. Residues 133-134 (QS) and Trp177 each bind FMN. 183–185 (RLH) contacts substrate. Arg187 serves as a coordination point for FMN.

It belongs to the pyridoxamine 5'-phosphate oxidase family. Homodimer. Requires FMN as cofactor.

It catalyses the reaction pyridoxamine 5'-phosphate + O2 + H2O = pyridoxal 5'-phosphate + H2O2 + NH4(+). The catalysed reaction is pyridoxine 5'-phosphate + O2 = pyridoxal 5'-phosphate + H2O2. The protein operates within cofactor metabolism; pyridoxal 5'-phosphate salvage; pyridoxal 5'-phosphate from pyridoxamine 5'-phosphate: step 1/1. Its pathway is cofactor metabolism; pyridoxal 5'-phosphate salvage; pyridoxal 5'-phosphate from pyridoxine 5'-phosphate: step 1/1. Its function is as follows. Catalyzes the oxidation of either pyridoxine 5'-phosphate (PNP) or pyridoxamine 5'-phosphate (PMP) into pyridoxal 5'-phosphate (PLP). This Jannaschia sp. (strain CCS1) protein is Pyridoxine/pyridoxamine 5'-phosphate oxidase.